A 364-amino-acid chain; its full sequence is Inner membrane ABC transporter permease protein YejB (364 aa).

Topologically, residues 1-8 (MGAYLIRR) are periplasmic. Residues 9-29 (LLLVIPTLWAIITINFFIVQI) form a helical membrane-spanning segment. Residues 30–37 (APGGPVDQ) are Cytoplasmic-facing. A helical membrane pass occupies residues 38–58 (AIAAIEFGNAGVLPGAGGEGV). The Periplasmic segment spans residues 59–135 (RASHAQTGVG…LTLIKDSLPV (77 aa)). Positions 133–348 (LPVSITLGLW…LIGLLLNIVS (216 aa)) constitute an ABC transmembrane type-1 domain. The chain crosses the membrane as a helical span at residues 136–156 (SITLGLWSTLIIYLVSIPLGI). At 157–172 (RKAVYNGSRFDVWSSA) the chain is on the cytoplasmic side. Residues 173–193 (FIIIGYAIPAFLFAILLIVFF) traverse the membrane as a helical segment. Residues 194 to 224 (AGGSYFDLFPLRGLVSANFDSLPWYQKITDY) lie on the Periplasmic side of the membrane. The helical transmembrane segment at 225-245 (LWHITLPVLATVIGGFAALTM) threads the bilayer. At 246-284 (LTKNSFLDEVRKQYVVTARAKGVSEKNILWKHVFRNAML) the chain is on the cytoplasmic side. The helical transmembrane segment at 285-305 (LVIAGFPATFISMFFTGSLLI) threads the bilayer. The Periplasmic segment spans residues 306–326 (EVMFSLNGLGLLGYEATVSRD). The chain crosses the membrane as a helical span at residues 327 to 347 (YPVMFGTLYIFTLIGLLLNIV). Over 348-364 (SDISYTLVDPRIDFEGR) the chain is Cytoplasmic.

Belongs to the binding-protein-dependent transport system permease family. OppBC subfamily.

Its subcellular location is the cell inner membrane. In terms of biological role, probably part of a binding-protein-dependent transport system. Probably responsible for the translocation of the substrate across the membrane. This is Inner membrane ABC transporter permease protein YejB (yejB) from Escherichia coli O157:H7.